We begin with the raw amino-acid sequence, 575 residues long: Triokinase/FMN cyclase (575 aa).

The 328-residue stretch at 9-336 folds into the DhaK domain; sequence SVAGCADDAL…IDAETTAAAW (328 aa). Residues 56–59, lysine 109, and aspartate 114 each bind dihydroxyacetone; that span reads GSGH. The Tele-hemiaminal-histidine intermediate role is filled by histidine 221. Positions 348–367 are disordered; that stretch reads KRSRVAPAEPQEAPDSTAAG. At serine 350 the chain carries Phosphoserine. In terms of domain architecture, DhaL spans 372–571; that stretch reads KRMALVLERV…AAAILRAILE (200 aa). Residues 401–404, 446–447, glycine 486, and 494–495 each bind ATP; these read DGDC, SS, and TM. A phosphoserine mark is found at serine 511 and serine 545. ATP is bound at residue 556-558; it reads DPG.

This sequence belongs to the dihydroxyacetone kinase (DAK) family. In terms of assembly, homodimer. Interacts with IFIH1 (via the CARD domains), the interaction is inhibited by viral infection. Requires Mg(2+) as cofactor. It depends on Mn(2+) as a cofactor. Co(2+) is required as a cofactor. In terms of tissue distribution, detected in erythrocytes (at protein level).

It carries out the reaction dihydroxyacetone + ATP = dihydroxyacetone phosphate + ADP + H(+). The enzyme catalyses D-glyceraldehyde + ATP = D-glyceraldehyde 3-phosphate + ADP + H(+). The catalysed reaction is FAD = riboflavin cyclic-4',5'-phosphate + AMP + H(+). Its activity is regulated as follows. Each activity is inhibited by the substrate(s) of the other. Catalyzes both the phosphorylation of dihydroxyacetone and of glyceraldehyde, and the splitting of ribonucleoside diphosphate-X compounds among which FAD is the best substrate. Represses IFIH1-mediated cellular antiviral response. The sequence is that of Triokinase/FMN cyclase from Homo sapiens (Human).